A 228-amino-acid polypeptide reads, in one-letter code: UPF0758 protein CLB_3028 (228 aa).

Residues Lys-106 to Ile-228 form the MPN domain. His-177, His-179, and Asp-190 together coordinate Zn(2+). The short motif at His-177–Asp-190 is the JAMM motif element.

Belongs to the UPF0758 family.

The chain is UPF0758 protein CLB_3028 from Clostridium botulinum (strain ATCC 19397 / Type A).